Reading from the N-terminus, the 100-residue chain is Small ribosomal subunit protein uS14c (100 aa).

The protein belongs to the universal ribosomal protein uS14 family. Part of the 30S ribosomal subunit.

Its subcellular location is the plastid. It localises to the chloroplast. In terms of biological role, binds 16S rRNA, required for the assembly of 30S particles. The polypeptide is Small ribosomal subunit protein uS14c (Pleurastrum terricola (Filamentous green alga)).